Consider the following 163-residue polypeptide: Putative H/ACA ribonucleoprotein complex subunit 2-like protein (163 aa).

The tract at residues 1 to 27 (MGKRNLDETMNESTVSEANGDATAPTT) is disordered.

Belongs to the eukaryotic ribosomal protein eL8 family. Component of the small nucleolar ribonucleoprotein particle containing H/ACA-type snoRNAs (H/ACA snoRNPs).

It localises to the nucleus. Its subcellular location is the nucleolus. In terms of biological role, required for ribosome biogenesis. Part of a complex which catalyzes pseudouridylation of rRNA. This involves the isomerization of uridine such that the ribose is subsequently attached to C5, instead of the normal N1. Pseudouridine ('psi') residues may serve to stabilize the conformation of rRNAs. In Caenorhabditis elegans, this protein is Putative H/ACA ribonucleoprotein complex subunit 2-like protein.